The primary structure comprises 1248 residues: Bifunctional autolysin (1248 aa).

The signal sequence occupies residues 1–29 (MAKKFNYKLPSMVALTLVGSAVTAHQVQA). The segment at 103-134 (GDTRANQSATTNNTQPVAKSTSTTAPKTNTNV) is disordered. The N-acetylmuramoyl-L-alanine amidase stretch occupies residues 191-767 (ASAQPRSVAA…AVAQPKTAVK (577 aa)). GW domains follow at residues 435-509 (TVAA…YNTA), 511-585 (SPVN…DTAK), 604-678 (TVSS…YNNA), 680-754 (SPVN…VPAA), 776-851 (TTQT…VQNL), 853-928 (KEVK…APTA), and 935-1009 (AAKD…KELI). The tract at residues 768 to 1248 (AYTVTKPQTT…GKYFDIPQYK (481 aa)) is endo-beta-N-acetylglucosaminidase.

This sequence in the N-terminal section; belongs to the N-acetylmuramoyl-L-alanine amidase 2 family. In the C-terminal section; belongs to the glycosyl hydrolase 73 family. Oligomer; forms a ring structure at the cell surface which is important for efficient partitioning of daughter cells after cell division. In terms of processing, undergoes proteolytic processing to generate the two extracellular lytic enzymes, probably at the septal region on the cell surface.

The protein resides in the secreted. It catalyses the reaction Hydrolyzes the link between N-acetylmuramoyl residues and L-amino acid residues in certain cell-wall glycopeptides.. It carries out the reaction an N(4)-(oligosaccharide-(1-&gt;3)-[oligosaccharide-(1-&gt;6)]-beta-D-Man-(1-&gt;4)-beta-D-GlcNAc-(1-&gt;4)-alpha-D-GlcNAc)-L-asparaginyl-[protein] + H2O = an oligosaccharide-(1-&gt;3)-[oligosaccharide-(1-&gt;6)]-beta-D-Man-(1-&gt;4)-D-GlcNAc + N(4)-(N-acetyl-beta-D-glucosaminyl)-L-asparaginyl-[protein]. Endohydrolysis of the di-N-acetylchitobiosyl unit in high-mannose glycopeptides and glycoproteins containing the -[(Man)5(GlcNAc)2]-Asn structure. One N-acetyl-D-glucosamine residue remains attached to the protein; the rest of the oligosaccharide is released intact. Cleaves the peptidoglycan connecting the daughter cells at the end of the cell division cycle, resulting in the separation of the two newly divided cells. Acts as an autolysin in penicillin-induced lysis. This chain is Bifunctional autolysin (atl), found in Staphylococcus aureus (strain Mu50 / ATCC 700699).